The primary structure comprises 1070 residues: DNA-directed RNA polymerase subunit beta (1070 aa).

This sequence belongs to the RNA polymerase beta chain family. In plastids the minimal PEP RNA polymerase catalytic core is composed of four subunits: alpha, beta, beta', and beta''. When a (nuclear-encoded) sigma factor is associated with the core the holoenzyme is formed, which can initiate transcription.

The protein localises to the plastid. It localises to the chloroplast. The catalysed reaction is RNA(n) + a ribonucleoside 5'-triphosphate = RNA(n+1) + diphosphate. In terms of biological role, DNA-dependent RNA polymerase catalyzes the transcription of DNA into RNA using the four ribonucleoside triphosphates as substrates. The sequence is that of DNA-directed RNA polymerase subunit beta from Platanus occidentalis (Sycamore).